Reading from the N-terminus, the 290-residue chain is Xyloglucan endotransglucosylase/hydrolase protein 3 (290 aa).

A signal peptide spans 1 to 21; it reads MDYMRIFSVFVVTLWIIRVDA. A GH16 domain is found at 22 to 220; the sequence is RVFGGRGIEK…WSYSPFIAHF (199 aa). The active-site Nucleophile is the E109. E113 (proton donor) is an active-site residue. Residues E113, 126-128, 136-138, 199-200, and G204 contribute to the xyloglucan site; these read QTN, NRE, and DW. N210 is a glycosylation site (N-linked (GlcNAc...) asparagine). Cystine bridges form between C228–C240 and C276–C289.

The protein belongs to the glycosyl hydrolase 16 family. XTH group 1 subfamily. Contains at least one intrachain disulfide bond essential for its enzymatic activity. Predominantly expressed in flower buds.

The protein localises to the secreted. The protein resides in the cell wall. It is found in the extracellular space. It localises to the apoplast. It catalyses the reaction breaks a beta-(1-&gt;4) bond in the backbone of a xyloglucan and transfers the xyloglucanyl segment on to O-4 of the non-reducing terminal glucose residue of an acceptor, which can be a xyloglucan or an oligosaccharide of xyloglucan.. In terms of biological role, catalyzes xyloglucan endohydrolysis (XEH) and/or endotransglycosylation (XET). Cleaves and religates xyloglucan polymers, an essential constituent of the primary cell wall, and thereby participates in cell wall construction of growing tissues. The sequence is that of Xyloglucan endotransglucosylase/hydrolase protein 3 (XTH3) from Arabidopsis thaliana (Mouse-ear cress).